A 90-amino-acid chain; its full sequence is uncharacterized protein (90 aa).

This is an uncharacterized protein from Haemophilus influenzae (strain ATCC 51907 / DSM 11121 / KW20 / Rd).